Reading from the N-terminus, the 458-residue chain is 3-isopropylmalate dehydratase large subunit (458 aa).

3 residues coordinate [4Fe-4S] cluster: Cys339, Cys399, and Cys402.

The protein belongs to the aconitase/IPM isomerase family. LeuC type 1 subfamily. As to quaternary structure, heterodimer of LeuC and LeuD. The cofactor is [4Fe-4S] cluster.

It carries out the reaction (2R,3S)-3-isopropylmalate = (2S)-2-isopropylmalate. The protein operates within amino-acid biosynthesis; L-leucine biosynthesis; L-leucine from 3-methyl-2-oxobutanoate: step 2/4. Catalyzes the isomerization between 2-isopropylmalate and 3-isopropylmalate, via the formation of 2-isopropylmaleate. This Lactococcus lactis subsp. cremoris (strain SK11) protein is 3-isopropylmalate dehydratase large subunit.